The following is a 193-amino-acid chain: Ribosomal RNA small subunit methyltransferase G (193 aa).

S-adenosyl-L-methionine contacts are provided by residues G72, F77, 123-124, and R137; that span reads IE.

The protein belongs to the methyltransferase superfamily. RNA methyltransferase RsmG family.

The protein localises to the cytoplasm. The enzyme catalyses guanosine(527) in 16S rRNA + S-adenosyl-L-methionine = N(7)-methylguanosine(527) in 16S rRNA + S-adenosyl-L-homocysteine. Specifically methylates the N7 position of guanine in position 527 of 16S rRNA. The chain is Ribosomal RNA small subunit methyltransferase G from Wolinella succinogenes (strain ATCC 29543 / DSM 1740 / CCUG 13145 / JCM 31913 / LMG 7466 / NCTC 11488 / FDC 602W) (Vibrio succinogenes).